Here is a 421-residue protein sequence, read N- to C-terminus: 3-isopropylmalate dehydratase large subunit (421 aa).

[4Fe-4S] cluster is bound by residues cysteine 302, cysteine 362, and cysteine 365.

It belongs to the aconitase/IPM isomerase family. LeuC type 2 subfamily. As to quaternary structure, heterodimer of LeuC and LeuD. Requires [4Fe-4S] cluster as cofactor.

The catalysed reaction is (2R,3S)-3-isopropylmalate = (2S)-2-isopropylmalate. Its pathway is amino-acid biosynthesis; L-leucine biosynthesis; L-leucine from 3-methyl-2-oxobutanoate: step 2/4. In terms of biological role, catalyzes the isomerization between 2-isopropylmalate and 3-isopropylmalate, via the formation of 2-isopropylmaleate. This chain is 3-isopropylmalate dehydratase large subunit, found in Campylobacter fetus subsp. fetus (strain 82-40).